The sequence spans 563 residues: Adenine deaminase (563 aa).

The protein belongs to the metallo-dependent hydrolases superfamily. Adenine deaminase family. It depends on Mn(2+) as a cofactor.

The enzyme catalyses adenine + H2O + H(+) = hypoxanthine + NH4(+). This is Adenine deaminase from Brucella anthropi (strain ATCC 49188 / DSM 6882 / CCUG 24695 / JCM 21032 / LMG 3331 / NBRC 15819 / NCTC 12168 / Alc 37) (Ochrobactrum anthropi).